Reading from the N-terminus, the 361-residue chain is Methyltransferase LUC1 (361 aa).

5 residues coordinate S-adenosyl-L-homocysteine: tyrosine 18, asparagine 66, aspartate 89, serine 126, and phenylalanine 127. Mg(2+) contacts are provided by glutamine 156 and phenylalanine 233.

It belongs to the methyltransferase superfamily. Type-7 methyltransferase family. Mg(2+) is required as a cofactor.

It functions in the pathway mycotoxin biosynthesis. Functionally, methyltransferase; part of the gene cluster that mediates the biosynthesis of the mycotoxin lucilactaene and the lucilactaene-related compound NG-391 that act as cell cycle inhibitors with potent growth inhibitory activity against malarial parasites, moderate growth inhibitory activity against cancer cells, and no activity against bacteria and fungi. LUC1 performs the last step of the pathway and methylates the hydroxyl group of demethyllucilactaene at C-21 to yeald lucilactaene. The pathway begins with the hybrid PKS-NRPS synthetase LUC5 which is responsible for the condensation of one acetyl-coenzyme A (CoA) unit with six malonyl-CoA units and the amide linkage of the arising heptaketide and homoserine, subsequently releasing the first intermediate prelucilactaene B. Both the cytochrome P450 monooxygenase LUC2 and the hydrolase LUC6 function in parallel in modification of prelucilactaene B. LUC6 may catalyze the 2-pyrrolidone ring formation to form prelucilactaene C from prelucilactaene B, followed by C-15 hydroxylation by the same enzyme to give prelucilactaene D, which is then converted to prelucilactaene E by epoxidation, and finally to prelucilactaene F by cyclization. Prelucilactane D, prelucilactaene E, and prelucilactaene F can be converted to dihydrolucilactaene, NG391, and lucilactaene, respectively, via C-20 methyl group hydroxylation by the cytochrome P450 monooxygenase LUC2. However, LUC2, unlike FUS8 in fusarin C biosynthesis, is not enough for the full oxidation of the C-20 methyl group into carboxylic acid, which is a prerequisite for the final methylation step. The aldehyde dehydrogenase LUC3 is involved in the biosynthesis by further oxidation of the C-20 alcoholic analog prelucilactaene G into a carboxylic derivative. This unidentified carboxylic derivative may be converted to demethyllucilactaene. As the last step, the methyltransferase LUC1 methylates the hydroxyl group at C-21 of demethyllucilactaene to generate lucilactaene. This is Methyltransferase LUC1 from Fusarium sp.